The primary structure comprises 228 residues: ATP-dependent dethiobiotin synthetase BioD (228 aa).

Position 12-17 (12-17) interacts with ATP; it reads EIGKTT. Thr16 lines the Mg(2+) pocket. The active site involves Lys37. Ser41 contacts substrate. Residues Asp54, 116-119, and 205-207 contribute to the ATP site; these read EGAG and PRL. 2 residues coordinate Mg(2+): Asp54 and Glu116.

It belongs to the dethiobiotin synthetase family. Homodimer. Mg(2+) is required as a cofactor.

The protein resides in the cytoplasm. The catalysed reaction is (7R,8S)-7,8-diammoniononanoate + CO2 + ATP = (4R,5S)-dethiobiotin + ADP + phosphate + 3 H(+). Its pathway is cofactor biosynthesis; biotin biosynthesis; biotin from 7,8-diaminononanoate: step 1/2. In terms of biological role, catalyzes a mechanistically unusual reaction, the ATP-dependent insertion of CO2 between the N7 and N8 nitrogen atoms of 7,8-diaminopelargonic acid (DAPA, also called 7,8-diammoniononanoate) to form a ureido ring. The polypeptide is ATP-dependent dethiobiotin synthetase BioD (Pseudomonas paraeruginosa (strain DSM 24068 / PA7) (Pseudomonas aeruginosa (strain PA7))).